The following is a 331-amino-acid chain: Ornithine carbamoyltransferase (331 aa).

Carbamoyl phosphate contacts are provided by residues 55 to 58, Gln-82, Arg-106, and 133 to 136; these read STRT and HPTQ. L-ornithine is bound by residues Asn-166, Asp-230, and 234-235; that span reads SM. Carbamoyl phosphate-binding positions include 272–273 and Arg-317; that span reads CL.

Belongs to the aspartate/ornithine carbamoyltransferase superfamily. OTCase family.

Its subcellular location is the cytoplasm. The enzyme catalyses carbamoyl phosphate + L-ornithine = L-citrulline + phosphate + H(+). It functions in the pathway amino-acid biosynthesis; L-arginine biosynthesis; L-arginine from L-ornithine and carbamoyl phosphate: step 1/3. Functionally, reversibly catalyzes the transfer of the carbamoyl group from carbamoyl phosphate (CP) to the N(epsilon) atom of ornithine (ORN) to produce L-citrulline. This Neisseria meningitidis serogroup A / serotype 4A (strain DSM 15465 / Z2491) protein is Ornithine carbamoyltransferase (argF).